A 356-amino-acid chain; its full sequence is Biotin synthase (356 aa).

The Radical SAM core domain occupies 51–270 (NKVQCNQLLN…IALARIMMPL (220 aa)). Cysteine 66, cysteine 70, and cysteine 73 together coordinate [4Fe-4S] cluster. 4 residues coordinate [2Fe-2S] cluster: cysteine 110, cysteine 141, cysteine 201, and arginine 274. Residues 310–356 (PGDNKDRSLFDRLGLEPRDDHGVHEHSSHSHTHDQGHDHGPHGHSHG) are disordered. The span at 312-350 (DNKDRSLFDRLGLEPRDDHGVHEHSSHSHTHDQGHDHGP) shows a compositional bias: basic and acidic residues.

Belongs to the radical SAM superfamily. Biotin synthase family. As to quaternary structure, homodimer. It depends on [4Fe-4S] cluster as a cofactor. The cofactor is [2Fe-2S] cluster.

The catalysed reaction is (4R,5S)-dethiobiotin + (sulfur carrier)-SH + 2 reduced [2Fe-2S]-[ferredoxin] + 2 S-adenosyl-L-methionine = (sulfur carrier)-H + biotin + 2 5'-deoxyadenosine + 2 L-methionine + 2 oxidized [2Fe-2S]-[ferredoxin]. It functions in the pathway cofactor biosynthesis; biotin biosynthesis; biotin from 7,8-diaminononanoate: step 2/2. Functionally, catalyzes the conversion of dethiobiotin (DTB) to biotin by the insertion of a sulfur atom into dethiobiotin via a radical-based mechanism. The polypeptide is Biotin synthase (Rhodopseudomonas palustris (strain BisB18)).